The sequence spans 299 residues: Probable lipid kinase YegS (299 aa).

The 132-residue stretch at 2 to 133 (ANFPASLLIL…IDMARVNDKT (132 aa)) folds into the DAGKc domain. Residues threonine 40, 66 to 72 (GDGTINE), and threonine 95 contribute to the ATP site. Mg(2+) contacts are provided by leucine 215, aspartate 218, and leucine 220. Glutamate 271 acts as the Proton acceptor in catalysis.

This sequence belongs to the diacylglycerol/lipid kinase family. YegS lipid kinase subfamily. Requires Mg(2+) as cofactor. The cofactor is Ca(2+).

The protein resides in the cytoplasm. Probably phosphorylates lipids; the in vivo substrate is unknown. The polypeptide is Probable lipid kinase YegS (Salmonella gallinarum (strain 287/91 / NCTC 13346)).